The following is a 432-amino-acid chain: Ornithine decarboxylase, chloroplastic (432 aa).

The residue at position 95 (lysine 95) is an N6-(pyridoxal phosphate)lysine. Pyridoxal 5'-phosphate contacts are provided by residues serine 227, glycine 265, and 298–301 (EPGR). 341 to 342 (YD) lines the substrate pocket. The active-site Proton donor; shared with dimeric partner is the cysteine 377. Aspartate 378 is a substrate binding site. Tyrosine 406 provides a ligand contact to pyridoxal 5'-phosphate.

The protein belongs to the Orn/Lys/Arg decarboxylase class-II family. As to quaternary structure, homodimer. Only the dimer is catalytically active, as the active sites are constructed of residues from both monomers. Pyridoxal 5'-phosphate is required as a cofactor.

It localises to the plastid. Its subcellular location is the chloroplast. The enzyme catalyses L-lysine + H(+) = cadaverine + CO2. It catalyses the reaction L-ornithine + H(+) = putrescine + CO2. It functions in the pathway alkaloid biosynthesis; nicotine biosynthesis. Its pathway is amine and polyamine biosynthesis; putrescine biosynthesis via L-ornithine pathway; putrescine from L-ornithine: step 1/1. With respect to regulation, repressed by alpha-difluoromethylornithine (DFMO), 5,5'-dithiobis-(2-nitrobenzoic acid) (DTNB) and salicylaldehyde. Functionally, involved in the biosynthesis of pyridine alkaloid natural products, leading mainly to the production of anabasine, anatabine, nicotine and nornicotine, effective deterrents against herbivores with antiparasitic and pesticide properties (neurotoxins); nornicotine serves as the precursor in the synthesis of the carcinogen compound N'-nitrosonornicotine (NNN). Catalyzes the first and rate-limiting step of polyamine biosynthesis that converts ornithine into putrescine, which is the precursor for the polyamines, spermidine and spermine. Can also use, with a lower efficiency, L-lysine as substrate to produce cadaverine. Polyamines are essential for cell proliferation and are implicated in cellular processes, ranging from DNA replication to apoptosis. The polypeptide is Ornithine decarboxylase, chloroplastic (Nicotiana glutinosa (Tobacco)).